The sequence spans 269 residues: Cytochrome c oxidase subunit 3 (269 aa).

7 consecutive transmembrane segments (helical) span residues 19–39, 44–64, 87–107, 135–155, 170–190, 205–225, and 247–267; these read PWPF…TLYL, HSSV…YLWF, IGFM…FWAF, LEVP…LTYA, GLYM…YEYW, FYFA…LLLA, and IYYW…IYIW.

It belongs to the cytochrome c oxidase subunit 3 family. In terms of assembly, component of the cytochrome c oxidase (complex IV, CIV), a multisubunit enzyme composed of a catalytic core of 3 subunits and several supernumerary subunits. The complex exists as a monomer or a dimer and forms supercomplexes (SCs) in the inner mitochondrial membrane with ubiquinol-cytochrome c oxidoreductase (cytochrome b-c1 complex, complex III, CIII).

It localises to the mitochondrion inner membrane. It catalyses the reaction 4 Fe(II)-[cytochrome c] + O2 + 8 H(+)(in) = 4 Fe(III)-[cytochrome c] + 2 H2O + 4 H(+)(out). Its function is as follows. Component of the cytochrome c oxidase, the last enzyme in the mitochondrial electron transport chain which drives oxidative phosphorylation. The respiratory chain contains 3 multisubunit complexes succinate dehydrogenase (complex II, CII), ubiquinol-cytochrome c oxidoreductase (cytochrome b-c1 complex, complex III, CIII) and cytochrome c oxidase (complex IV, CIV), that cooperate to transfer electrons derived from NADH and succinate to molecular oxygen, creating an electrochemical gradient over the inner membrane that drives transmembrane transport and the ATP synthase. Cytochrome c oxidase is the component of the respiratory chain that catalyzes the reduction of oxygen to water. Electrons originating from reduced cytochrome c in the intermembrane space (IMS) are transferred via the dinuclear copper A center (CU(A)) of subunit 2 and heme A of subunit 1 to the active site in subunit 1, a binuclear center (BNC) formed by heme A3 and copper B (CU(B)). The BNC reduces molecular oxygen to 2 water molecules using 4 electrons from cytochrome c in the IMS and 4 protons from the mitochondrial matrix. This is Cytochrome c oxidase subunit 3 (cox3) from Schizosaccharomyces pombe (strain 972 / ATCC 24843) (Fission yeast).